Consider the following 317-residue polypeptide: L-lactate dehydrogenase (317 aa).

NAD(+)-binding positions include 16-17 (FV), aspartate 38, lysine 43, tyrosine 69, and 83-84 (GA). 2 residues coordinate substrate: glutamine 86 and arginine 92. NAD(+) contacts are provided by residues serine 105, 122–124 (ATN), and serine 147. 124–127 (NPVD) contacts substrate. 152–155 (DTAR) provides a ligand contact to substrate. Beta-D-fructose 1,6-bisphosphate contacts are provided by residues arginine 157 and 169–172 (QNVH). The active-site Proton acceptor is the histidine 179. Tyrosine 224 carries the post-translational modification Phosphotyrosine. Position 233 (threonine 233) interacts with substrate.

The protein belongs to the LDH/MDH superfamily. LDH family. In terms of assembly, exists as a dimer and a tetramer (dimer of dimers). The conversion occurs via the binding of fructose 1,6-bisphosphate (FBP) to the dimer.

The protein resides in the cytoplasm. It catalyses the reaction (S)-lactate + NAD(+) = pyruvate + NADH + H(+). It participates in fermentation; pyruvate fermentation to lactate; (S)-lactate from pyruvate: step 1/1. With respect to regulation, allosterically activated by fructose 1,6-bisphosphate (FBP). The improvement in affinity for substrate occurs in two steps; the binding of fructose 1,6-bisphosphate (FBP) to the dimer, and the dimer to tetramer conversion. In terms of biological role, catalyzes the conversion of lactate to pyruvate. This is L-lactate dehydrogenase from Geobacillus stearothermophilus (Bacillus stearothermophilus).